We begin with the raw amino-acid sequence, 71 residues long: Small ribosomal subunit protein bS21 (71 aa).

The segment at 39 to 71 is disordered; the sequence is EKPTQERKRKAAAAVKRQMRRTSRDVTKRKRLY. Residues 45 to 71 show a composition bias toward basic residues; it reads RKRKAAAAVKRQMRRTSRDVTKRKRLY.

The protein belongs to the bacterial ribosomal protein bS21 family.

The protein is Small ribosomal subunit protein bS21 of Xylella fastidiosa (strain M12).